The following is a 241-amino-acid chain: MSGSNREAALAGQPKDERKKSGGGVINRLKARRVQGKESGTSDQSSITRFREEELLGLNELRPEHVLGLSRVTDNYLCKPEDNIFGIDFTRFKIRDLETGTVLFEISKPCSEQEEEEESTHLDASAGRFVRYQFTPAFLRLRKVGATVEFTVGDKPVKSFRMIERHYFRDRILKSFDFDFGFCIPNSRNTCEHMYEFPQLSEELIRLMTENPYETRSDSFYFVDNKLIMHNKADYAYNGGQ.

Residues 1–46 (MSGSNREAALAGQPKDERKKSGGGVINRLKARRVQGKESGTSDQSS) form a disordered region. Tyr132 serves as a coordination point for tetradecanoate.

It belongs to the PDE6D/unc-119 family.

It localises to the cell projection. It is found in the cilium. Its function is as follows. Myristoyl-binding protein that acts as a cargo adapter: specifically binds the myristoyl moiety of a subset of N-terminally myristoylated proteins and is required for their localization. Plays a key role in localization of proteins to the primary cilium membrane. The protein is Protein unc-119 homolog B-B (unc119b-b) of Xenopus laevis (African clawed frog).